A 582-amino-acid chain; its full sequence is Zinc finger protein somi-1 (582 aa).

Disordered regions lie at residues 179–251 (LRPE…NNTD) and 352–377 (SAEPMKRHRVEAHEKQSPKKKVKKEQ). The segment covering 188 to 226 (TQKSTNGVHRSTSNSSAETLRNNSVSAATVSPSDDNSLN) has biased composition (polar residues). The segment covering 227 to 244 (SPALTSSGSAGSGTPPLG) has biased composition (low complexity). The span at 352–368 (SAEPMKRHRVEAHEKQS) shows a compositional bias: basic and acidic residues. The segment at 454-477 (YICEDCDFVTVYKGNMKRHLNTCH) adopts a C2H2-type; Degenerate zinc-finger fold. Residues 513-582 (AHKANSSRGR…PPPPPPPMLL (70 aa)) form a disordered region. Residues 551–570 (LLESLASSSSSMGGYSNGNN) are compositionally biased toward low complexity. The span at 572-582 (QPPPPPPPMLL) shows a compositional bias: pro residues.

In terms of assembly, may interact with swsn-9; the interaction promotes hypodermal differentiation. As to expression, expressed in hypodermal seam cells, the somatic gonad and vulval precursor cells, body wall muscle and head neurons.

It is found in the nucleus. Functionally, DNA-binding protein which binds to the promoters of let-60, lin-14 and lin-28, possibly to regulate genes involved in hypodermal and vulval development. Together with miRNAs mir-84 and let-7 may direct terminal differentiation of the seam cells, exit from the molting cycle, and vulva formation. Does not regulate the expression of mir-84. May promote hypodermal differentiation in association with swsn-9, a component of SWI/SNF chromatin remodeling complexes. The protein is Zinc finger protein somi-1 of Caenorhabditis elegans.